Consider the following 312-residue polypeptide: Zinc transporter ZitB (312 aa).

6 consecutive transmembrane segments (helical) span residues 16–36 (LLIA…GGWL), 40–60 (LALL…FIAL), 81–101 (LTTL…ILIV), 117–137 (TPML…FWIL), 153–173 (LHVL…IVIL), and 177–197 (WTPI…RNAW).

It belongs to the cation diffusion facilitator (CDF) transporter (TC 2.A.4) family. SLC30A subfamily.

It is found in the cell inner membrane. In terms of biological role, involved in zinc efflux across the cytoplasmic membrane, thus reducing zinc accumulation in the cytoplasm and rendering bacteria more resistant to zinc. It may contribute to zinc homeostasis at low concentrations of zinc. The sequence is that of Zinc transporter ZitB from Yersinia pseudotuberculosis serotype I (strain IP32953).